A 38-amino-acid polypeptide reads, in one-letter code: Large ribosomal subunit protein bL36 (38 aa).

The protein belongs to the bacterial ribosomal protein bL36 family.

The polypeptide is Large ribosomal subunit protein bL36 (Azotobacter vinelandii (strain DJ / ATCC BAA-1303)).